The sequence spans 724 residues: Methionine--tRNA ligase (724 aa).

The short motif at 11-21 is the 'HIGH' region element; sequence PYANGPIHAGH. Zn(2+) contacts are provided by Cys-143, Cys-146, Cys-156, and Cys-159. A 'KMSKS' region motif is present at residues 344–348; the sequence is KFSTS. Thr-347 contacts ATP. In terms of domain architecture, tRNA-binding spans 624–724; that stretch reads EFSKIDLRIG…KEVKLGAKVR (101 aa).

This sequence belongs to the class-I aminoacyl-tRNA synthetase family. MetG type 1 subfamily. Homodimer. Zn(2+) serves as cofactor.

Its subcellular location is the cytoplasm. It carries out the reaction tRNA(Met) + L-methionine + ATP = L-methionyl-tRNA(Met) + AMP + diphosphate. Functionally, is required not only for elongation of protein synthesis but also for the initiation of all mRNA translation through initiator tRNA(fMet) aminoacylation. The polypeptide is Methionine--tRNA ligase (Pyrococcus furiosus (strain ATCC 43587 / DSM 3638 / JCM 8422 / Vc1)).